The following is a 794-amino-acid chain: Phenylalanine--tRNA ligase beta subunit (794 aa).

Residues 39–154 (SSSFSSIITA…ANTPLGESAC (116 aa)) enclose the tRNA-binding domain. The B5 domain occupies 403–481 (PPSPTLTLRT…QPWKIEKKKA (79 aa)). The Mg(2+) site is built by D457, D463, E466, and E467. One can recognise an FDX-ACB domain in the interval 697–793 (PIYPSSFRDI…QLDDTKGTID (97 aa)).

It belongs to the phenylalanyl-tRNA synthetase beta subunit family. Type 1 subfamily. Tetramer of two alpha and two beta subunits. Requires Mg(2+) as cofactor.

It is found in the cytoplasm. It carries out the reaction tRNA(Phe) + L-phenylalanine + ATP = L-phenylalanyl-tRNA(Phe) + AMP + diphosphate + H(+). The chain is Phenylalanine--tRNA ligase beta subunit from Chlamydia abortus (strain DSM 27085 / S26/3) (Chlamydophila abortus).